Consider the following 244-residue polypeptide: Orotidine 5'-phosphate decarboxylase (244 aa).

Substrate-binding positions include D10, K32, 59–68, T122, R184, Q193, G213, and R214; that span reads DLKLHDIPNT. The active-site Proton donor is the K61.

Belongs to the OMP decarboxylase family. Type 1 subfamily. Homodimer.

It carries out the reaction orotidine 5'-phosphate + H(+) = UMP + CO2. The protein operates within pyrimidine metabolism; UMP biosynthesis via de novo pathway; UMP from orotate: step 2/2. Its function is as follows. Catalyzes the decarboxylation of orotidine 5'-monophosphate (OMP) to uridine 5'-monophosphate (UMP). The polypeptide is Orotidine 5'-phosphate decarboxylase (Bacillus caldolyticus).